A 123-amino-acid polypeptide reads, in one-letter code: Glucose starvation-inducible protein B (123 aa).

Composition is skewed to basic and acidic residues over residues 1–29 and 41–109; these read MADN…KEFY and SKNH…KEFY. Residues 1–123 are disordered; sequence MADNNKMSRE…SKGGNARNND (123 aa). Tandem repeats lie at residues 13 to 32, 33 to 52, 53 to 72, 73 to 92, and 93 to 112. The segment at 13–120 is 5 X 20 AA approximate tandem repeats; that stretch reads GRKGGETTSK…EIGSKGGNAR (108 aa).

Functionally, involved in an adaptive response to nutrient deprivation other than sporulation. The polypeptide is Glucose starvation-inducible protein B (gsiB) (Bacillus subtilis (strain 168)).